Consider the following 427-residue polypeptide: Adenylosuccinate synthetase (427 aa).

GTP-binding positions include 12–18 and 40–42; these read GDEGKGK and GHT. D13 (proton acceptor) is an active-site residue. Positions 13 and 40 each coordinate Mg(2+). IMP contacts are provided by residues 13-16, 38-41, T128, R142, Q223, T238, and R302; these read DEGK and NAGH. The active-site Proton donor is the H41. 298 to 304 is a binding site for substrate; the sequence is VTTGRAR. GTP contacts are provided by residues R304, 330 to 332, and 412 to 414; these read KLD and GVG.

The protein belongs to the adenylosuccinate synthetase family. As to quaternary structure, homodimer. Mg(2+) serves as cofactor.

The protein localises to the cytoplasm. The enzyme catalyses IMP + L-aspartate + GTP = N(6)-(1,2-dicarboxyethyl)-AMP + GDP + phosphate + 2 H(+). It participates in purine metabolism; AMP biosynthesis via de novo pathway; AMP from IMP: step 1/2. Plays an important role in the de novo pathway of purine nucleotide biosynthesis. Catalyzes the first committed step in the biosynthesis of AMP from IMP. In Parafrankia sp. (strain EAN1pec), this protein is Adenylosuccinate synthetase.